A 354-amino-acid polypeptide reads, in one-letter code: Uroporphyrinogen decarboxylase (354 aa).

Substrate contacts are provided by residues 27–31, Asp77, Tyr154, Thr209, and His327; that span reads RQAGR.

It belongs to the uroporphyrinogen decarboxylase family. In terms of assembly, homodimer.

Its subcellular location is the cytoplasm. The enzyme catalyses uroporphyrinogen III + 4 H(+) = coproporphyrinogen III + 4 CO2. It participates in porphyrin-containing compound metabolism; protoporphyrin-IX biosynthesis; coproporphyrinogen-III from 5-aminolevulinate: step 4/4. In terms of biological role, catalyzes the decarboxylation of four acetate groups of uroporphyrinogen-III to yield coproporphyrinogen-III. The polypeptide is Uroporphyrinogen decarboxylase (Salmonella schwarzengrund (strain CVM19633)).